A 210-amino-acid polypeptide reads, in one-letter code: Small ribosomal subunit protein bS6 (210 aa).

The segment at 99–210 is disordered; sequence PLPTKRNTKS…KDTKEVKEEG (112 aa). The span at 120-210 shows a compositional bias: basic and acidic residues; that stretch reads NDTKEVKEAK…KDTKEVKEEG (91 aa).

The protein belongs to the bacterial ribosomal protein bS6 family.

In terms of biological role, binds together with bS18 to 16S ribosomal RNA. This is Small ribosomal subunit protein bS6 from Prochlorococcus marinus (strain SARG / CCMP1375 / SS120).